The sequence spans 124 residues: Small ribosomal subunit protein uS12c (124 aa).

Disordered regions lie at residues 1–28 (MPTIQQLVRSERRKIHKKTKSPALQSCP) and 104–124 (AAGVKDRRKSRSKYGTKKPKS). Basic residues-rich tracts occupy residues 11 to 20 (ERRKIHKKTK) and 109 to 124 (DRRKSRSKYGTKKPKS).

Belongs to the universal ribosomal protein uS12 family. As to quaternary structure, part of the 30S ribosomal subunit.

The protein localises to the plastid. The protein resides in the chloroplast. In terms of biological role, with S4 and S5 plays an important role in translational accuracy. Located at the interface of the 30S and 50S subunits. In Pyropia yezoensis (Susabi-nori), this protein is Small ribosomal subunit protein uS12c (rps12).